The following is a 187-amino-acid chain: Ribosome-recycling factor (187 aa).

Belongs to the RRF family.

The protein resides in the cytoplasm. Functionally, responsible for the release of ribosomes from messenger RNA at the termination of protein biosynthesis. May increase the efficiency of translation by recycling ribosomes from one round of translation to another. This Paracoccus zeaxanthinifaciens protein is Ribosome-recycling factor.